Here is a 541-residue protein sequence, read N- to C-terminus: Calcium-dependent protein kinase 26 (541 aa).

Residues 1 to 11 (MGQCCTGGGKA) are compositionally biased toward gly residues. Residues 1 to 74 (MGQCCTGGGK…AGPIGEVLER (74 aa)) form a disordered region. The N-myristoyl glycine moiety is linked to residue Gly2. Positions 38-67 (AKQQPCSPAAKAAATEAAAAASSSKKPAGP) are enriched in low complexity. Positions 83-341 (YSIGKELGRG…AFQVLNHPWI (259 aa)) constitute a Protein kinase domain. Residues 89 to 97 (LGRGQFGVT) and Lys112 contribute to the ATP site. The active-site Proton acceptor is the Asp207. The segment at 347-377 (APDVPLDNVVLNRLKQFRAMNQFKKAALRII) is autoinhibitory domain. EF-hand domains lie at 384-419 (EEIKGLKEMFKNIDKDNSGTITLEELKNGLAKQGTK), 420-455 (FSDNEIEQLMEAADADGNGIIDYEEFVTATVHMNKM), 456-491 (DREEHLYTAFQYFDKDNSGYITKEELEQALKEQGLY), and 493-526 (ANEIKDVITDADSNNDGRIDYSEFVAMMRKGSGC). Positions 397, 399, 401, 403, 408, 433, 435, 437, 444, 469, 471, 473, 475, 480, 504, 506, 508, 510, and 515 each coordinate Ca(2+).

This sequence belongs to the protein kinase superfamily. Ser/Thr protein kinase family. CDPK subfamily. As to expression, specifically expressed in heading panicles, spikelets and mature pollen grains. Not expressed in vegetative tissues.

Its subcellular location is the membrane. It catalyses the reaction L-seryl-[protein] + ATP = O-phospho-L-seryl-[protein] + ADP + H(+). The catalysed reaction is L-threonyl-[protein] + ATP = O-phospho-L-threonyl-[protein] + ADP + H(+). Its activity is regulated as follows. Activated by calcium. Autophosphorylation may play an important role in the regulation of the kinase activity. Its function is as follows. May play a role in signal transduction pathways that involve calcium as a second messenger. The sequence is that of Calcium-dependent protein kinase 26 from Oryza sativa subsp. japonica (Rice).